Here is a 232-residue protein sequence, read N- to C-terminus: Uracil phosphoribosyltransferase (232 aa).

38 to 42 (KGLVK) lines the GTP pocket. 5-phospho-alpha-D-ribose 1-diphosphate contacts are provided by residues R87, R112, and 140–148 (DPMIATGST). Uracil contacts are provided by residues I204 and 209–211 (GDA). D210 lines the 5-phospho-alpha-D-ribose 1-diphosphate pocket.

It belongs to the UPRTase family. Mg(2+) is required as a cofactor.

The enzyme catalyses UMP + diphosphate = 5-phospho-alpha-D-ribose 1-diphosphate + uracil. Its pathway is pyrimidine metabolism; UMP biosynthesis via salvage pathway; UMP from uracil: step 1/1. With respect to regulation, allosterically activated by GTP. Catalyzes the conversion of uracil and 5-phospho-alpha-D-ribose 1-diphosphate (PRPP) to UMP and diphosphate. This is Uracil phosphoribosyltransferase from Thermococcus sibiricus (strain DSM 12597 / MM 739).